Here is a 215-residue protein sequence, read N- to C-terminus: Beta-crystallin A3-1 (215 aa).

The tract at residues methionine 1 to proline 30 is N-terminal arm. Beta/gamma crystallin 'Greek key' domains lie at tryptophan 31 to cysteine 70 and glycine 71 to cysteine 117. Residues serine 118–glutamate 123 are connecting peptide. Beta/gamma crystallin 'Greek key' domains follow at residues serine 124 to cysteine 165 and glycine 166 to glutamine 214.

The protein belongs to the beta/gamma-crystallin family. As to quaternary structure, homo/heterodimer, or complexes of higher-order. The structure of beta-crystallin oligomers seems to be stabilized through interactions between the N-terminal arms. The N-terminus is blocked.

In terms of biological role, crystallins are the dominant structural components of the vertebrate eye lens. This chain is Beta-crystallin A3-1, found in Aquarana catesbeiana (American bullfrog).